Reading from the N-terminus, the 184-residue chain is Ribosome-recycling factor (184 aa).

It belongs to the RRF family.

It localises to the cytoplasm. Its function is as follows. Responsible for the release of ribosomes from messenger RNA at the termination of protein biosynthesis. May increase the efficiency of translation by recycling ribosomes from one round of translation to another. This chain is Ribosome-recycling factor, found in Aster yellows witches'-broom phytoplasma (strain AYWB).